A 326-amino-acid polypeptide reads, in one-letter code: Target of rapamycin complex subunit lst8 (326 aa).

WD repeat units follow at residues 1–37 (MNVNQGTVGSDPVILATAGYDHTVRFWQAHSGICTRT), 40–80 (HQDS…PVIN), 83–122 (GVSKNITSVGFHEDGRWMYTGGEDCMARIWDLRSRNLQCQ), 126–165 (QVNAPINCVCLHPNQAELIVGDQSGVIHIWDLKTDHNEQL), 168–207 (EPDVSVNSVHIDPDASYMAAVNSSGNCYVWNLAGGMGDEV), 218–257 (AHKRYSLRCKFSPDSTLLATCSADQTCKIWRTSNFSLMTE), and 268–309 (TSRG…REYS).

The protein belongs to the WD repeat LST8 family. As to quaternary structure, part of the mechanistic target of rapamycin complex 1 (mTORC1) which contains MTOR, MLST8 and RPTOR. Component of the mechanistic target of rapamycin complex 2 (mTORC2), consisting in two heterotretramers composed of MTOR, MLST8, RICTOR and MAPKAP1/SIN1.

The protein resides in the lysosome membrane. It is found in the cytoplasm. Functionally, subunit of both mTORC1 and mTORC2, which regulates cell growth and survival in response to nutrient and hormonal signals. mTORC1 is activated in response to growth factors or amino acids. In response to nutrients, mTORC1 is recruited to the lysosome membrane and promotes protein, lipid and nucleotide synthesis by phosphorylating several substrates, such as ribosomal protein S6 kinase (RPS6KB1 and RPS6KB2) and EIF4EBP1 (4E-BP1). In the same time, it inhibits catabolic pathways by phosphorylating the autophagy initiation components ULK1 and ATG13, as well as transcription factor TFEB, a master regulators of lysosomal biogenesis and autophagy. The mTORC1 complex is inhibited in response to starvation and amino acid depletion. Within mTORC1, MLST8 interacts directly with MTOR and enhances its kinase activity. In nutrient-poor conditions, stabilizes the MTOR-RPTOR interaction and favors RPTOR-mediated inhibition of MTOR activity. As part of the mTORC2 complex, transduces signals from growth factors to pathways involved in proliferation, cytoskeletal organization, lipogenesis and anabolic output. mTORC2 is also activated by growth factors, but seems to be nutrient-insensitive. In response to growth factors, mTORC2 phosphorylates and activates AGC protein kinase family members, including AKT (AKT1, AKT2 and AKT3), PKC (PRKCA, PRKCB and PRKCE) and SGK1. mTORC2 functions upstream of Rho GTPases to regulate the actin cytoskeleton, probably by activating one or more Rho-type guanine nucleotide exchange factors. mTORC2 promotes the serum-induced formation of stress-fibers or F-actin. Within mTORC2, MLST8 acts as a bridge between MAPKAP1/SIN1 and MTOR. In Danio rerio (Zebrafish), this protein is Target of rapamycin complex subunit lst8 (mlst8).